A 246-amino-acid polypeptide reads, in one-letter code: Carboxy-S-adenosyl-L-methionine synthase (246 aa).

S-adenosyl-L-methionine-binding positions include Tyr-39, 64-66 (GCS), 89-90 (DN), 121-122 (DI), Asn-136, and Arg-203.

Belongs to the class I-like SAM-binding methyltransferase superfamily. Cx-SAM synthase family. In terms of assembly, homodimer.

It carries out the reaction prephenate + S-adenosyl-L-methionine = carboxy-S-adenosyl-L-methionine + 3-phenylpyruvate + H2O. Its function is as follows. Catalyzes the conversion of S-adenosyl-L-methionine (SAM) to carboxy-S-adenosyl-L-methionine (Cx-SAM). This Pseudomonas aeruginosa (strain UCBPP-PA14) protein is Carboxy-S-adenosyl-L-methionine synthase.